A 354-amino-acid chain; its full sequence is MRVGLLFGGCSGEHEVSIKSAQAIAKALASDDNQTKYQVSPFYIQKNGVWLGPDVSQQVLDQGVPWGDQPVTAGQRWQFPPEAARMEVWFPILHGPNGEDGTVQGLFSLMQVPYVGSGVLGSCVGMDKLAMKMVFERAGLPQVNYMGVERGEIWSNPCVFPALCEKIEAQVGYPCFVKPANLGSSVGIAKVRNRSELEAALDNAASYDRRIIVEAGLTDIREVECAVLGNENPQASVVGEITYDSDFYDYETKYTDGRSQMHIPANLPKAVVNQIQTMAIQAFKAVDAAGLGRLDFFYQPTTGQIVINEINTLPGFTAFSMYPELWRASGVEFPSLVDRLLQLALDYHGRPGHQ.

An ATP-grasp domain is found at 132–342; the sequence is KMVFERAGLP…FPSLVDRLLQ (211 aa). 168 to 223 contributes to the ATP binding site; the sequence is EAQVGYPCFVKPANLGSSVGIAKVRNRSELEAALDNAASYDRRIIVEAGLTDIREV. 3 residues coordinate Mg(2+): Asp295, Glu309, and Asn311.

This sequence belongs to the D-alanine--D-alanine ligase family. Mg(2+) is required as a cofactor. Requires Mn(2+) as cofactor.

It is found in the cytoplasm. It carries out the reaction 2 D-alanine + ATP = D-alanyl-D-alanine + ADP + phosphate + H(+). It functions in the pathway cell wall biogenesis; peptidoglycan biosynthesis. In terms of biological role, cell wall formation. The sequence is that of D-alanine--D-alanine ligase from Synechocystis sp. (strain ATCC 27184 / PCC 6803 / Kazusa).